The sequence spans 504 residues: MRRALPIMFQGTHSDAGKSMLATAFCRIFARNGWKTAPFKSQNMSLNSYVTLDGKEIGRAQGVQAEAAGVVATTHMNPILIKPSRDQEAQIVVHGKPYENMKASTYRNEFFHLGLELIQQSLHVLMNEYDRLVIEGAGSPAEVNLNDRELVNMRVARMANAPVVLVGDIERGGVFASLVGTLQLLEEQDRKRVIGVIINKFRGDLSLLEPGLRWFEQYTGVKVLGVVPYMHVRIDAEDSVALSRYATKKDDAKAIDVAVIRYPRISNFTDIDPFFAEPDCSVRFVSDASSLGEPDILILPGSKNTIEDVYFLTETGLFSSIQRLYERTNVTMIGICGGYQMLGECIKDPFHVETPLDAVAGLSLLPIETTLACEKTTVLSEGTLVYKNEMFDVKGYEIHMGRSIVKQGEPLILLSGKTDGCKTKDERVIGTYMHDLFHNDMFRHHLLNGVRRKKQLSPLMERPNYRQLRAQAFDDLADCVEKHVDVKAIERKMIEFQRGEHHAL.

The GATase cobBQ-type domain occupies 254–442; it reads AIDVAVIRYP…MHDLFHNDMF (189 aa). Cys336 (nucleophile) is an active-site residue. The active site involves His434.

It belongs to the CobB/CobQ family. CobQ subfamily.

The protein operates within cofactor biosynthesis; adenosylcobalamin biosynthesis. Catalyzes amidations at positions B, D, E, and G on adenosylcobyrinic A,C-diamide. NH(2) groups are provided by glutamine, and one molecule of ATP is hydrogenolyzed for each amidation. The sequence is that of Cobyric acid synthase from Anoxybacillus flavithermus (strain DSM 21510 / WK1).